Here is a 683-residue protein sequence, read N- to C-terminus: Protein zntD (683 aa).

Transmembrane regions (helical) follow at residues 12-32, 42-62, and 79-99; these read IIST…PYWM, LSWS…LHLF, and PFAA…ELII. Basic residues predominate over residues 120-129; the sequence is VHLSHGHSHH. Disordered stretches follow at residues 120-180, 299-325, 364-390, and 451-489; these read VHLS…TTTT, GFSN…NNNN, CSND…TPNT, and IGNS…NNNN. Over residues 137–149 the composition is skewed to gly residues; that stretch reads GNPGSGVGIGMGS. Low complexity-rich tracts occupy residues 160-180 and 302-325; these read TTSP…TTTT and NNNN…NNNN. Low complexity predominate over residues 451-465; that stretch reads IGNSGNIGSNNNNNN. Residues 466–475 are compositionally biased toward gly residues; that stretch reads NGGGGGGGGN. Over residues 476-489 the composition is skewed to low complexity; that stretch reads SNIDYNDNEENNNN. 5 helical membrane-spanning segments follow: residues 534–554, 564–584, 600–620, 631–651, and 662–682; these read ILLP…EGLA, VFDI…ALGI, FLLV…GMVI, PPIL…VEII, and ILIK…VAIW.

It belongs to the ZIP transporter (TC 2.A.5) family.

The protein localises to the membrane. May transport divalent cations. May participate, with dstA, in the regulation of the differentiation of stalk cells during development. This chain is Protein zntD (zntD), found in Dictyostelium discoideum (Social amoeba).